A 473-amino-acid chain; its full sequence is ATP synthase subunit beta (473 aa).

153–160 (GGAGVGKT) is an ATP binding site.

It belongs to the ATPase alpha/beta chains family. F-type ATPases have 2 components, CF(1) - the catalytic core - and CF(0) - the membrane proton channel. CF(1) has five subunits: alpha(3), beta(3), gamma(1), delta(1), epsilon(1). CF(0) has three main subunits: a(1), b(2) and c(9-12). The alpha and beta chains form an alternating ring which encloses part of the gamma chain. CF(1) is attached to CF(0) by a central stalk formed by the gamma and epsilon chains, while a peripheral stalk is formed by the delta and b chains.

It localises to the cell inner membrane. It catalyses the reaction ATP + H2O + 4 H(+)(in) = ADP + phosphate + 5 H(+)(out). In terms of biological role, produces ATP from ADP in the presence of a proton gradient across the membrane. The catalytic sites are hosted primarily by the beta subunits. This is ATP synthase subunit beta from Rickettsia bellii (strain RML369-C).